A 105-amino-acid chain; its full sequence is uncharacterized protein (105 aa).

Residues 13-35 (LLFAFVVVIVVLTLSYVYAQNII) traverse the membrane as a helical segment.

The protein resides in the membrane. This is an uncharacterized protein from Archaeoglobus fulgidus (strain ATCC 49558 / DSM 4304 / JCM 9628 / NBRC 100126 / VC-16).